The sequence spans 382 residues: uncharacterized protein (382 aa).

Helical transmembrane passes span 8–28 (VMLL…LNTL), 45–65 (MVSS…GYLI), 75–95 (YLAS…VGFW), 102–122 (FIAG…LMCS), 131–151 (LLAA…LLVS), 157–177 (LLHV…PLLF), 204–224 (LGVN…GLMP), 231–251 (GMAN…GILG), 270–290 (VQVF…AMAP), 291–311 (ALFI…AWAC), 325–345 (ALLL…AMLM), and 349–369 (SDNL…LMLL).

This sequence belongs to the major facilitator superfamily. YcaD (TC 2.A.1.26) family.

The protein localises to the cell inner membrane. This is an uncharacterized protein from Salmonella newport (strain SL254).